The chain runs to 212 residues: Thiamine-phosphate synthase (212 aa).

4-amino-2-methyl-5-(diphosphooxymethyl)pyrimidine-binding positions include 35–39 (QLRRK) and Asn-67. Mg(2+)-binding residues include Asp-68 and Asp-87. Ser-106 contributes to the 4-amino-2-methyl-5-(diphosphooxymethyl)pyrimidine binding site. 132-134 (TGS) contributes to the 2-[(2R,5Z)-2-carboxy-4-methylthiazol-5(2H)-ylidene]ethyl phosphate binding site. Lys-135 contributes to the 4-amino-2-methyl-5-(diphosphooxymethyl)pyrimidine binding site. Residues Gly-163 and 183–184 (IS) each bind 2-[(2R,5Z)-2-carboxy-4-methylthiazol-5(2H)-ylidene]ethyl phosphate.

Belongs to the thiamine-phosphate synthase family. Mg(2+) is required as a cofactor.

It catalyses the reaction 2-[(2R,5Z)-2-carboxy-4-methylthiazol-5(2H)-ylidene]ethyl phosphate + 4-amino-2-methyl-5-(diphosphooxymethyl)pyrimidine + 2 H(+) = thiamine phosphate + CO2 + diphosphate. The catalysed reaction is 2-(2-carboxy-4-methylthiazol-5-yl)ethyl phosphate + 4-amino-2-methyl-5-(diphosphooxymethyl)pyrimidine + 2 H(+) = thiamine phosphate + CO2 + diphosphate. The enzyme catalyses 4-methyl-5-(2-phosphooxyethyl)-thiazole + 4-amino-2-methyl-5-(diphosphooxymethyl)pyrimidine + H(+) = thiamine phosphate + diphosphate. It functions in the pathway cofactor biosynthesis; thiamine diphosphate biosynthesis; thiamine phosphate from 4-amino-2-methyl-5-diphosphomethylpyrimidine and 4-methyl-5-(2-phosphoethyl)-thiazole: step 1/1. Its function is as follows. Condenses 4-methyl-5-(beta-hydroxyethyl)thiazole monophosphate (THZ-P) and 2-methyl-4-amino-5-hydroxymethyl pyrimidine pyrophosphate (HMP-PP) to form thiamine monophosphate (TMP). This chain is Thiamine-phosphate synthase, found in Chlorobium luteolum (strain DSM 273 / BCRC 81028 / 2530) (Pelodictyon luteolum).